We begin with the raw amino-acid sequence, 1642 residues long: Cholesterol transporter ABCA5 (1642 aa).

A helical transmembrane segment spans residues 32-52 (SVQEILFPLFFLFWLILVSMM). An N-linked (GlcNAc...) asparagine glycan is attached at Asn86. A run of 5 helical transmembrane segments spans residues 220 to 240 (VILI…AIHI), 264 to 284 (LSWV…MAVI), 297 to 317 (IVIF…ALML), 328 to 348 (GVVE…IVLI), and 355 to 375 (LVWL…AQVM). The N-linked (GlcNAc...) asparagine glycan is linked to Asn388. Residues 396–416 (LIITIIMLALDSVFYVLLAVY) form a helical membrane-spanning segment. Asn458 carries an N-linked (GlcNAc...) asparagine glycan. The ABC transporter 1 domain maps to 478–713 (IRISGIQKSY…WGIGYRLSMY (236 aa)). Residue 514–521 (GHSGTGKS) coordinates ATP. The chain crosses the membrane as a helical span at residues 864-884 (AVLLLLLIFFAVQIFMFFLHH). N-linked (GlcNAc...) asparagine glycosylation occurs at Asn919. The helical transmembrane segment at 967 to 987 (VFSAVFNSTMVYCLPVMMNII) threads the bilayer. The N-linked (GlcNAc...) asparagine glycan is linked to Asn996. A run of 6 helical transmembrane segments spans residues 1021-1041 (LYFQ…YFAM), 1071-1091 (VVDI…LFAF), 1102-1122 (FLAV…FTYI), 1138-1158 (SFIY…TFFL), 1164-1184 (AVFH…GCLI), and 1207-1227 (LLVA…LLQH). Residues 1290-1533 (IMVCNLHKEY…FGKGYFLEIK (244 aa)) form the ABC transporter 2 domain. ATP is bound at residue 1333–1340 (GPNGAGKS).

Belongs to the ABC transporter superfamily. ABCA family. Post-translationally, N-glycosylated. Expressed in cardiomyocytes, oligodendrocytes and astrocytes in brain, alveolar type 2 cells in lung and follicular cells in the thyroid gland (at protein level). Detected in brain, testis, lung, heart, liver, kidney, skeletal muscle and placenta. Strongly expressed in the basal cells of the seminiferous tubules, interstitial cells consisting of Leydig cells, as well as the tunica albuginea. In the epididymis, specifically and very strongly expressed in the connective tissue outlining the cylindrical epithelium in the corpus and cauda regions, including fibrocytes and smooth muscle cells, as well as within the basal and tall columnar cells of the corpus cylindrical epithelium. Highly expressed in the brain with high expression in cortical and hippocampal neurons and moderately in the lung.

It is found in the golgi apparatus membrane. Its subcellular location is the lysosome membrane. The protein localises to the late endosome membrane. The protein resides in the cell membrane. It catalyses the reaction cholesterol(in) + ATP + H2O = cholesterol(out) + ADP + phosphate + H(+). Cholesterol efflux transporter in macrophages that is responsible for APOAI/high-density lipoproteins (HDL) formation at the plasma membrane under high cholesterol levels and participates in reverse cholesterol transport. May play a role in the processing of autolysosomes. The sequence is that of Cholesterol transporter ABCA5 from Mus musculus (Mouse).